A 208-amino-acid chain; its full sequence is Thymidylate kinase (208 aa).

10–17 provides a ligand contact to ATP; the sequence is GPDGSGKT.

The protein belongs to the thymidylate kinase family.

The enzyme catalyses dTMP + ATP = dTDP + ADP. Functionally, phosphorylation of dTMP to form dTDP in both de novo and salvage pathways of dTTP synthesis. The chain is Thymidylate kinase from Listeria monocytogenes serotype 4a (strain HCC23).